The sequence spans 431 residues: Serine--tRNA ligase (431 aa).

L-serine is bound at residue 237–239 (TAE). Residue 268–270 (RSE) coordinates ATP. Glu-291 is a binding site for L-serine. 355-358 (EISS) is a binding site for ATP. Ser-390 lines the L-serine pocket.

Belongs to the class-II aminoacyl-tRNA synthetase family. Type-1 seryl-tRNA synthetase subfamily. In terms of assembly, homodimer. The tRNA molecule binds across the dimer.

The protein resides in the cytoplasm. It carries out the reaction tRNA(Ser) + L-serine + ATP = L-seryl-tRNA(Ser) + AMP + diphosphate + H(+). It catalyses the reaction tRNA(Sec) + L-serine + ATP = L-seryl-tRNA(Sec) + AMP + diphosphate + H(+). It functions in the pathway aminoacyl-tRNA biosynthesis; selenocysteinyl-tRNA(Sec) biosynthesis; L-seryl-tRNA(Sec) from L-serine and tRNA(Sec): step 1/1. Catalyzes the attachment of serine to tRNA(Ser). Is also able to aminoacylate tRNA(Sec) with serine, to form the misacylated tRNA L-seryl-tRNA(Sec), which will be further converted into selenocysteinyl-tRNA(Sec). The polypeptide is Serine--tRNA ligase (Neisseria meningitidis serogroup B (strain ATCC BAA-335 / MC58)).